The primary structure comprises 283 residues: Acetyl-coenzyme A carboxylase carboxyl transferase subunit beta (283 aa).

The 257-residue stretch at 27 to 283 (VWVKCERCGE…LLDLHLRGEK (257 aa)) folds into the CoA carboxyltransferase N-terminal domain. Zn(2+) is bound by residues Cys31, Cys34, Cys50, and Cys53. The segment at 31–53 (CERCGEILFKKELDKNYKVCLKC) adopts a C4-type zinc-finger fold.

This sequence belongs to the AccD/PCCB family. As to quaternary structure, acetyl-CoA carboxylase is a heterohexamer composed of biotin carboxyl carrier protein (AccB), biotin carboxylase (AccC) and two subunits each of ACCase subunit alpha (AccA) and ACCase subunit beta (AccD). Zn(2+) serves as cofactor.

It is found in the cytoplasm. The enzyme catalyses N(6)-carboxybiotinyl-L-lysyl-[protein] + acetyl-CoA = N(6)-biotinyl-L-lysyl-[protein] + malonyl-CoA. Its pathway is lipid metabolism; malonyl-CoA biosynthesis; malonyl-CoA from acetyl-CoA: step 1/1. Functionally, component of the acetyl coenzyme A carboxylase (ACC) complex. Biotin carboxylase (BC) catalyzes the carboxylation of biotin on its carrier protein (BCCP) and then the CO(2) group is transferred by the transcarboxylase to acetyl-CoA to form malonyl-CoA. The chain is Acetyl-coenzyme A carboxylase carboxyl transferase subunit beta from Pelotomaculum thermopropionicum (strain DSM 13744 / JCM 10971 / SI).